The primary structure comprises 154 residues: MPKVFEGHLLGQELKFGIVVGRFNEFITNKLLSGALDALKRHGVEDENVEIAYVPGAYEIPLVAKKMADSKRYDGVICLGAVIRGATPHFEYVSAEVSKGVAKISLDSNLPVIFGVLTVDTIEQAIERAGTKAGNKGWEAANAAIEMANLLKTI.

5-amino-6-(D-ribitylamino)uracil-binding positions include Phe-23, 57-59, and 81-83; these read AYE and AVI. 86–87 serves as a coordination point for (2S)-2-hydroxy-3-oxobutyl phosphate; that stretch reads AT. His-89 acts as the Proton donor in catalysis. Phe-114 contributes to the 5-amino-6-(D-ribitylamino)uracil binding site. Arg-128 is a (2S)-2-hydroxy-3-oxobutyl phosphate binding site.

This sequence belongs to the DMRL synthase family.

The catalysed reaction is (2S)-2-hydroxy-3-oxobutyl phosphate + 5-amino-6-(D-ribitylamino)uracil = 6,7-dimethyl-8-(1-D-ribityl)lumazine + phosphate + 2 H2O + H(+). It functions in the pathway cofactor biosynthesis; riboflavin biosynthesis; riboflavin from 2-hydroxy-3-oxobutyl phosphate and 5-amino-6-(D-ribitylamino)uracil: step 1/2. Catalyzes the formation of 6,7-dimethyl-8-ribityllumazine by condensation of 5-amino-6-(D-ribitylamino)uracil with 3,4-dihydroxy-2-butanone 4-phosphate. This is the penultimate step in the biosynthesis of riboflavin. The sequence is that of 6,7-dimethyl-8-ribityllumazine synthase from Desulforamulus reducens (strain ATCC BAA-1160 / DSM 100696 / MI-1) (Desulfotomaculum reducens).